A 163-amino-acid chain; its full sequence is Acetolactate synthase isozyme 3 small subunit (163 aa).

The ACT domain maps to 4–78 (ILSVLLENES…DVLRVSELGQ (75 aa)).

Belongs to the acetolactate synthase small subunit family. In terms of assembly, dimer of large and small chains.

The enzyme catalyses 2 pyruvate + H(+) = (2S)-2-acetolactate + CO2. It participates in amino-acid biosynthesis; L-isoleucine biosynthesis; L-isoleucine from 2-oxobutanoate: step 1/4. Its pathway is amino-acid biosynthesis; L-valine biosynthesis; L-valine from pyruvate: step 1/4. Its activity is regulated as follows. Sensitive to valine inhibition. In Salmonella typhimurium (strain LT2 / SGSC1412 / ATCC 700720), this protein is Acetolactate synthase isozyme 3 small subunit (ilvH).